We begin with the raw amino-acid sequence, 540 residues long: DM7 family protein GM11956 (540 aa).

Residues 416 to 443 form a disordered region; that stretch reads ATDTRGRDEIRTSCDQPQEKDEGSAEAD. Residues 417–443 are compositionally biased toward basic and acidic residues; the sequence is TDTRGRDEIRTSCDQPQEKDEGSAEAD.

It belongs to the DM7 family.

In Drosophila sechellia (Fruit fly), this protein is DM7 family protein GM11956.